A 332-amino-acid chain; its full sequence is Endo-1,4-beta-xylanase B (332 aa).

Positions 2–331 (STEIPSLSAS…KDSFWRIIGQ (330 aa)) constitute a GH10 domain. The active-site Proton donor is the Glu134. The active-site Nucleophile is the Glu241.

It belongs to the glycosyl hydrolase 10 (cellulase F) family. Cytoplasmic xylanase subfamily.

The protein localises to the cytoplasm. It catalyses the reaction Endohydrolysis of (1-&gt;4)-beta-D-xylosidic linkages in xylans.. Its pathway is glycan degradation; xylan degradation. Its activity is regulated as follows. Completely inhibited by Ag(2+), Cu(2+), Hg(2+), Mn(2+), Pb(2+) and Sn(2+). Strongly inhibited by Fe(2+) and Zn(2+). Co(2+) and Ni(2+) cause little inhibition while Ca(2+) and Mg(2+) do not affect enzyme activity, and Ba(2+) produces a small stimulating effect. Irreversibly inactivated by SDS in vitro. In terms of biological role, plays a role in plant xylan biodegradation, probably via the hydrolysis of short xylooligosaccharides resulting from extracellular xylan hydrolysis, once they have been transported inside cells. Shows similar activity on xylans of different rate of arabinose or methylglucuronic substitution. Also displays high activity on aryl-xylosides. Is active on xylotetraose and xylotriose, but does not hydrolyze xylobiose, indicating that XynB is a xylanase and not a beta-xylosidase. The protein is Endo-1,4-beta-xylanase B (xynB) of Paenibacillus barcinonensis.